A 540-amino-acid polypeptide reads, in one-letter code: Cytochrome bc1 complex cytochrome b subunit (540 aa).

A helical membrane pass occupies residues 40–60 (EIALYSFIILLLTGVYLTLFF). Heme contacts are provided by His105 and His119. Helical transmembrane passes span 109–129 (ALTFMVSMTVHMLRIFFTGAF), 137–157 (WIIGCVLLFLGMAEGFMGYSL), and 169–189 (IMSAIILALPIIGTWLHWLIF). Heme is bound by residues His206 and His221. A run of 5 helical transmembrane segments spans residues 207 to 227 (VLIIPGIILGLIAAHLALVWY), 259 to 279 (FGLVTFGVLALLAGLTSINAI), 325 to 345 (AFWVALLCGVLVGLLVGYPFI), 371 to 391 (LGVMAIVFYFLLTLSGGNDLF), and 408 to 428 (IGLIVLPPLAYFITYRICLGL).

This sequence belongs to the cytochrome b family. As to quaternary structure, the cytochrome bc1 complex is composed of a cytochrome b (QcrB), the Rieske protein iron-sulfur (QcrA) and a diheme cytochrome c (QcrC) subunit. The cofactor is heme.

It localises to the cell membrane. The enzyme catalyses a quinol + 2 Fe(III)-[cytochrome c](out) = a quinone + 2 Fe(II)-[cytochrome c](out) + 2 H(+)(out). Cytochrome b subunit of the cytochrome bc1 complex, an essential component of the respiratory electron transport chain required for ATP synthesis. The bc1 complex catalyzes the oxidation of menaquinol and the reduction of cytochrome c in the respiratory chain. The bc1 complex operates through a Q-cycle mechanism that couples electron transfer to generation of the proton gradient that drives ATP synthesis. The polypeptide is Cytochrome bc1 complex cytochrome b subunit (qcrB) (Corynebacterium diphtheriae (strain ATCC 700971 / NCTC 13129 / Biotype gravis)).